The primary structure comprises 488 residues: Ribulose bisphosphate carboxylase large chain (488 aa).

Substrate is bound by residues N127 and T177. The Proton acceptor role is filled by K179. Residue K181 coordinates substrate. Mg(2+) is bound by residues K205, D207, and E208. K205 carries the N6-carboxylysine modification. The active-site Proton acceptor is H297. Positions 298, 330, and 382 each coordinate substrate.

It belongs to the RuBisCO large chain family. Type I subfamily. In terms of assembly, heterohexadecamer of 8 large chains and 8 small chains. Requires Mg(2+) as cofactor.

It is found in the plastid. The protein resides in the chloroplast. The enzyme catalyses 2 (2R)-3-phosphoglycerate + 2 H(+) = D-ribulose 1,5-bisphosphate + CO2 + H2O. It carries out the reaction D-ribulose 1,5-bisphosphate + O2 = 2-phosphoglycolate + (2R)-3-phosphoglycerate + 2 H(+). Its function is as follows. RuBisCO catalyzes two reactions: the carboxylation of D-ribulose 1,5-bisphosphate, the primary event in carbon dioxide fixation, as well as the oxidative fragmentation of the pentose substrate in the photorespiration process. Both reactions occur simultaneously and in competition at the same active site. This is Ribulose bisphosphate carboxylase large chain from Ectocarpus siliculosus (Brown alga).